The chain runs to 446 residues: N-succinylarginine dihydrolase (446 aa).

Substrate-binding positions include 19-28 (AGLSFGNVAS), asparagine 110, and 137-138 (HR). Glutamate 174 is a catalytic residue. Arginine 213 serves as a coordination point for substrate. Histidine 249 is a catalytic residue. Residues aspartate 251 and asparagine 364 each coordinate substrate. Catalysis depends on cysteine 370, which acts as the Nucleophile.

Belongs to the succinylarginine dihydrolase family. In terms of assembly, homodimer.

The catalysed reaction is N(2)-succinyl-L-arginine + 2 H2O + 2 H(+) = N(2)-succinyl-L-ornithine + 2 NH4(+) + CO2. Its pathway is amino-acid degradation; L-arginine degradation via AST pathway; L-glutamate and succinate from L-arginine: step 2/5. Functionally, catalyzes the hydrolysis of N(2)-succinylarginine into N(2)-succinylornithine, ammonia and CO(2). The protein is N-succinylarginine dihydrolase of Burkholderia cenocepacia (strain HI2424).